The sequence spans 1738 residues: Complement C4-B (1738 aa).

A signal peptide spans 1–19 (MRLLWGLAWVFSFCASSLQ). A disulfide bond links Cys-66 and Cys-95. N-linked (GlcNAc...) asparagine glycosylation is present at Asn-224. An intrachain disulfide couples Cys-633 to Cys-667. A propeptide spanning residues 674-677 (RQKR) is cleaved from the precursor. 3 disulfides stabilise this stretch: Cys-700/Cys-726, Cys-701/Cys-733, and Cys-714/Cys-734. The Anaphylatoxin-like domain maps to 700–734 (CCQDGMTKLPMKRTCEQRAARVPQQACREPFLSCC). Asn-743 is a glycosylation site (N-linked (GlcNAc...) asparagine). Residues 1006–1009 (CAEQ) constitute a cross-link (isoglutamyl cysteine thioester (Cys-Gln)). N-linked (GlcNAc...) asparagine glycosylation is found at Asn-1324 and Asn-1387. A sulfotyrosine mark is found at Tyr-1413, Tyr-1416, and Tyr-1417. The propeptide occupies 1444–1447 (RRRR). Disulfide bonds link Cys-1465-Cys-1529, Cys-1577-Cys-1582, Cys-1589-Cys-1667, Cys-1612-Cys-1736, and Cys-1712-Cys-1721. The region spanning 1589–1736 (CPRLLRSLER…FLMEFSSRGC (148 aa)) is the NTR domain.

In absence of complement activation, circulates in blood as a disulfide-linked trimer of an alpha, beta and gamma chain. As to quaternary structure, complement C4b is composed of complement C4b-A, complement C4 beta and complement C4 gamma chains that are associated via disulfide bonds. Non-enzymatic component of the C3 convertase, also named C4bC2b, composed of the serine protease complement C2b (C2), as well as complement C4b. Non-enzymatic component of the C5 convertase, also named C4bC2bC3b, composed of the serine protease complement C2b (C2), complement C3b, as well as complement C4b. In terms of processing, prior to secretion, the single-chain precursor is enzymatically cleaved by plasminogen (PLG) to yield non-identical chains alpha, beta and gamma. During activation of the complement systems, the alpha chain is cleaved into C4a and C4b by different proteases depending on the complement pathway: C4b stays linked to the beta and gamma chains, while C4a is released in the plasma. The alpha chain is cleaved by C1S to generate C4a and C4b following activation by the classical complement system. The alpha chain is cleaved to generate C4a and C4b by MASP2 following activation by the lectin complement system. The alpha chain is cleaved by GZMK to generate C4a and C4b following activation by the GZMK complement system. Further degradation of C4b by C1 into the inactive fragments C4c and C4d blocks the generation of C3 convertase. The proteolytic cleavages often are incomplete so that many structural forms can be found in plasma. Post-translationally, upon activation, the internal thioester bond reacts with carbohydrate antigens on the target surface to form amide or ester bonds, leading to covalent association with the surface of pathogens. Complement C4b interacts with complement C3b via a thioester linkage.

It is found in the secreted. It localises to the cell surface. Its function is as follows. Precursor of non-enzymatic components of the classical, lectin and GZMK complement pathways, which consist in a cascade of proteins that leads to phagocytosis and breakdown of pathogens and signaling that strengthens the adaptive immune system. Functionally, non-enzymatic component of C3 and C5 convertases. Generated following cleavage by complement proteases (C1S, MASP2 or GZMK, depending on the complement pathway), it covalently attaches to the surface of pathogens, where it acts as an opsonin that marks the surface of antigens for removal. It then recruits the serine protease complement C2b to form the C3 and C5 convertases, which cleave and activate C3 and C5, respectively, the next components of the complement pathways. Complement C4b-A isotype is responsible for effective binding to form amide bonds with immune aggregates or protein antigens, while complement C4b-B isotype catalyzes the transacylation of the thioester carbonyl group to form ester bonds with carbohydrate antigens. Putative humoral mediator released following cleavage by complement proteases (C1S, MASP2 or GZMK, depending on the complement pathway). While it is strongly similar to anaphylatoxins, its role is unclear. Was reported to act as a mediator of local inflammatory process; however these effects were probably due to contamination with C3a and/C5a anaphylatoxins in biological assays. This chain is Complement C4-B, found in Mus musculus (Mouse).